Consider the following 687-residue polypeptide: Polyphosphate kinase (687 aa).

Asn45 lines the ATP pocket. Mg(2+)-binding residues include Arg375 and Arg405. Catalysis depends on His435, which acts as the Phosphohistidine intermediate. ATP contacts are provided by Tyr472, Arg568, and His596.

This sequence belongs to the polyphosphate kinase 1 (PPK1) family. Mg(2+) serves as cofactor. An intermediate of this reaction is the autophosphorylated ppk in which a phosphate is covalently linked to a histidine residue through a N-P bond.

It carries out the reaction [phosphate](n) + ATP = [phosphate](n+1) + ADP. Its function is as follows. Catalyzes the reversible transfer of the terminal phosphate of ATP to form a long-chain polyphosphate (polyP). This Burkholderia cenocepacia (strain HI2424) protein is Polyphosphate kinase.